We begin with the raw amino-acid sequence, 60 residues long: Large ribosomal subunit protein bL32 (60 aa).

A disordered region spans residues 1 to 21; sequence MAVQQNKKSPSKRGMHRAHNA. The segment covering 9-19 has biased composition (basic residues); the sequence is SPSKRGMHRAH.

The protein belongs to the bacterial ribosomal protein bL32 family.

The sequence is that of Large ribosomal subunit protein bL32 from Albidiferax ferrireducens (strain ATCC BAA-621 / DSM 15236 / T118) (Rhodoferax ferrireducens).